We begin with the raw amino-acid sequence, 165 residues long: Ribosome maturation factor RimM (165 aa).

Positions 94-165 constitute a PRC barrel domain; sequence EDEFYIADLN…YVILNYQTKV (72 aa).

This sequence belongs to the RimM family. As to quaternary structure, binds ribosomal protein uS19.

The protein resides in the cytoplasm. Functionally, an accessory protein needed during the final step in the assembly of 30S ribosomal subunit, possibly for assembly of the head region. Essential for efficient processing of 16S rRNA. May be needed both before and after RbfA during the maturation of 16S rRNA. It has affinity for free ribosomal 30S subunits but not for 70S ribosomes. The chain is Ribosome maturation factor RimM from Rickettsia prowazekii (strain Madrid E).